The sequence spans 73 residues: Translation initiation factor IF-1 (73 aa).

An S1-like domain is found at 1 to 73 (MSEKEAGIEV…TRGRITYRDK (73 aa)).

It belongs to the IF-1 family. Component of the 30S ribosomal translation pre-initiation complex which assembles on the 30S ribosome in the order IF-2 and IF-3, IF-1 and N-formylmethionyl-tRNA(fMet); mRNA recruitment can occur at any time during PIC assembly.

The protein localises to the cytoplasm. Its function is as follows. One of the essential components for the initiation of protein synthesis. Stabilizes the binding of IF-2 and IF-3 on the 30S subunit to which N-formylmethionyl-tRNA(fMet) subsequently binds. Helps modulate mRNA selection, yielding the 30S pre-initiation complex (PIC). Upon addition of the 50S ribosomal subunit IF-1, IF-2 and IF-3 are released leaving the mature 70S translation initiation complex. The protein is Translation initiation factor IF-1 of Anaeromyxobacter sp. (strain Fw109-5).